The chain runs to 225 residues: MTARPLSELIDDGWASALAPVESQVTQMGEFLRAELADGHRYLPAGENVLRAFTFPLEKVRVLIVGQDPYPTPGHAVGLSFSVAPDVRPLPRSLDNIFREYREDLGYPTPSTGDLTPWCEQGVMLLNRVLTVRPGTPASHRGKGWEPVTECAIRALVARQQPMVAVLWGRDASTLKPMLGDTAVIESPHPSPLSASRGFFGSKPFSRANELLTQMGAEPVDWRLP.

Catalysis depends on Asp68, which acts as the Proton acceptor.

It belongs to the uracil-DNA glycosylase (UDG) superfamily. UNG family.

Its subcellular location is the cytoplasm. It carries out the reaction Hydrolyzes single-stranded DNA or mismatched double-stranded DNA and polynucleotides, releasing free uracil.. Functionally, excises uracil residues from the DNA which can arise as a result of misincorporation of dUMP residues by DNA polymerase or due to deamination of cytosine. The chain is Uracil-DNA glycosylase from Mycolicibacterium vanbaalenii (strain DSM 7251 / JCM 13017 / BCRC 16820 / KCTC 9966 / NRRL B-24157 / PYR-1) (Mycobacterium vanbaalenii).